We begin with the raw amino-acid sequence, 2321 residues long: Neurogenic locus notch homolog protein 3 (2321 aa).

The span at 1–14 (MGPGARGRRRRRRP) shows a compositional bias: basic residues. Residues 1-26 (MGPGARGRRRRRRPMSPPPPPPPVRA) are disordered. The first 39 residues, 1-39 (MGPGARGRRRRRRPMSPPPPPPPVRALPLLLLLAGPGAA), serve as a signal peptide directing secretion. Residues 15–25 (MSPPPPPPPVR) show a composition bias toward pro residues. EGF-like domains are found at residues 40–77 (APPC…ERCQ), 78–118 (LEDP…PDCS), and 119–156 (LPDP…RSCR). The Extracellular portion of the chain corresponds to 40 to 1643 (APPCLDGSPC…LEPPEPSVPL (1604 aa)). 99 disulfide bridges follow: Cys-43/Cys-55, Cys-49/Cys-65, Cys-67/Cys-76, Cys-82/Cys-93, Cys-87/Cys-106, Cys-108/Cys-117, Cys-123/Cys-134, Cys-128/Cys-144, Cys-146/Cys-155, Cys-162/Cys-174, Cys-168/Cys-183, Cys-185/Cys-194, Cys-201/Cys-212, Cys-206/Cys-222, Cys-224/Cys-233, Cys-240/Cys-251, Cys-245/Cys-260, Cys-262/Cys-271, Cys-278/Cys-291, Cys-285/Cys-300, Cys-302/Cys-311, Cys-318/Cys-329, Cys-323/Cys-338, Cys-340/Cys-349, Cys-355/Cys-366, Cys-360/Cys-377, Cys-379/Cys-388, Cys-395/Cys-408, Cys-402/Cys-417, Cys-419/Cys-428, Cys-435/Cys-446, Cys-440/Cys-455, Cys-457/Cys-466, Cys-473/Cys-484, Cys-478/Cys-493, Cys-495/Cys-504, Cys-511/Cys-522, Cys-516/Cys-531, Cys-533/Cys-542, Cys-549/Cys-559, Cys-554/Cys-568, Cys-570/Cys-579, Cys-586/Cys-597, Cys-591/Cys-606, Cys-608/Cys-617, Cys-624/Cys-634, Cys-629/Cys-643, Cys-645/Cys-654, Cys-661/Cys-672, Cys-666/Cys-681, Cys-683/Cys-692, Cys-699/Cys-709, Cys-704/Cys-718, Cys-720/Cys-729, Cys-738/Cys-749, Cys-743/Cys-758, Cys-760/Cys-769, Cys-775/Cys-786, Cys-780/Cys-796, Cys-798/Cys-807, Cys-814/Cys-826, Cys-820/Cys-835, Cys-837/Cys-846, Cys-853/Cys-864, Cys-858/Cys-873, Cys-875/Cys-884, Cys-891/Cys-901, Cys-896/Cys-910, Cys-912/Cys-921, Cys-928/Cys-939, Cys-933/Cys-948, Cys-950/Cys-959, Cys-966/Cys-977, Cys-971/Cys-986, Cys-988/Cys-997, Cys-1004/Cys-1015, Cys-1009/Cys-1022, Cys-1024/Cys-1033, Cys-1040/Cys-1061, Cys-1055/Cys-1070, Cys-1072/Cys-1081, Cys-1088/Cys-1099, Cys-1093/Cys-1108, Cys-1110/Cys-1119, Cys-1126/Cys-1137, Cys-1131/Cys-1146, Cys-1148/Cys-1157, Cys-1164/Cys-1182, Cys-1176/Cys-1191, Cys-1193/Cys-1202, Cys-1209/Cys-1222, Cys-1214/Cys-1232, Cys-1234/Cys-1243, Cys-1250/Cys-1261, Cys-1255/Cys-1275, Cys-1277/Cys-1286, Cys-1293/Cys-1304, Cys-1298/Cys-1313, and Cys-1315/Cys-1324. One can recognise an EGF-like 4; calcium-binding domain in the interval 158 to 195 (DVDECRVGEPCRHGGTCLNTPGSFRCQCPAGYTGPLCE). The 38-residue stretch at 197 to 234 (PAVPCAPSPCRNGGTCRQSGDLTYDCACLPGFEGQNCE) folds into the EGF-like 5 domain. In terms of domain architecture, EGF-like 6; calcium-binding spans 236 to 272 (NVDDCPGHRCLNGGTCVDGVNTYNCQCPPEWTGQFCT). One can recognise an EGF-like 7 domain in the interval 274-312 (DVDECQLQPNACHNGGTCFNTLGGHSCVCVNGWTGESCS). Positions 314–350 (NIDDCATAVCFHGATCHDRVASFYCACPMGKTGLLCH) constitute an EGF-like 8; calcium-binding domain. Residues 351-389 (LDDACVSNPCHEDAICDTNPVNGRAICTCPPGFTGGACD) enclose the EGF-like 9 domain. Residues 391–429 (DVDECSIGANPCEHLGRCVNTQGSFLCQCGRGYTGPRCE) form the EGF-like 10; calcium-binding domain. Residues 431 to 467 (DVNECLSGPCRNQATCLDRIGQFTCICMAGFTGTYCE) form the EGF-like 11; calcium-binding domain. An EGF-like 12; calcium-binding domain is found at 469-505 (DIDECQSSPCVNGGVCKDRVNGFSCTCPSGFSGSTCQ). An EGF-like 13; calcium-binding domain is found at 507–543 (DVDECASTPCRNGAKCVDQPDGYECRCAEGFEGTLCD). The EGF-like 14; calcium-binding domain occupies 545–580 (NVDDCSPDPCHHGRCVDGIASFSCACAPGYTGTRCE). Positions 582-618 (QVDECRSQPCRHGGKCLDLVDKYLCRCPSGTTGVNCE) constitute an EGF-like 15; calcium-binding domain. An EGF-like 16; calcium-binding domain is found at 620 to 655 (NIDDCASNPCTFGVCRDGINRYDCVCQPGFTGPLCN). The EGF-like 17; calcium-binding domain maps to 657–693 (EINECASSPCGEGGSCVDGENGFRCLCPPGSLPPLCL). EGF-like domains are found at residues 695–730 (PSHP…PRCS), 734–770 (ARDA…RQCE), and 771–808 (LLSP…PRCQ). The region spanning 810–847 (DVDECAGPAPCGPHGICTNLAGSFSCTCHGGYTGPSCD) is the EGF-like 21; calcium-binding domain. The EGF-like 22; calcium-binding domain occupies 849–885 (DINDCDPNPCLNGGSCQDGVGSFSCSCLPGFAGPRCA). Residues 887–922 (DVDECLSNPCGPGTCTDHVASFTCTCPPGYGGFHCE) form the EGF-like 23; calcium-binding domain. EGF-like domains follow at residues 924–960 (DLPD…AHCQ), 962–998 (EADP…PQCQ), 1000–1034 (LVDW…RLCD), 1036–1082 (RSLP…SHCE), and 1084–1120 (EVDP…DNCE). Residues 1122 to 1158 (DVDECASQPCQHGGSCIDLVARYLCSCPPGTLGVLCE) form the EGF-like 29; calcium-binding domain. The EGF-like 30; calcium-binding domain occupies 1160–1203 (NEDDCGPGPPLDSGPRCLHNGTCVDLVGGFRCTCPPGYTGLRCE). N-linked (GlcNAc...) asparagine glycosylation occurs at Asn-1179. EGF-like domains follow at residues 1205-1244 (DINE…PRCQ), 1246-1287 (VLSP…PRCE), 1289-1325 (VARS…PSCR), and 1335-1373 (SNAS…PRCE). Asn-1336 carries an N-linked (GlcNAc...) asparagine glycan. Disulfide bonds link Cys-1339–Cys-1350, Cys-1344–Cys-1361, Cys-1363–Cys-1372, Cys-1387–Cys-1410, Cys-1392–Cys-1405, Cys-1401–Cys-1417, Cys-1428–Cys-1451, Cys-1433–Cys-1446, Cys-1442–Cys-1458, Cys-1467–Cys-1493, Cys-1475–Cys-1488, and Cys-1484–Cys-1500. LNR repeat units lie at residues 1387–1427 (CPRA…PWRQ), 1428–1458 (CEAL…NFDC), and 1467–1505 (CNPV…SEVP). A glycan (N-linked (GlcNAc...) asparagine) is linked at Asn-1438. The helical transmembrane segment at 1644 to 1664 (LPLLVAGAVLLLVILVLGVMV) threads the bilayer. At 1665–2321 (ARRKREHSTL…EVTPKRQVLA (657 aa)) the chain is on the cytoplasmic side. 5 ANK repeats span residues 1838-1867 (TGET…DTNA), 1871-1901 (SGRT…DLDA), 1905-1934 (DGST…DVNA), 1938-1967 (LGKS…NKDM), and 1971-2000 (KEET…NREI). The interval 2024–2120 (LDQPSGPRSP…FGGPPASPGG (97 aa)) is disordered. Over residues 2039–2053 (LGPLLCPPGAFLPGL) the composition is skewed to low complexity. Arg-2174 is subject to Omega-N-methylarginine. The segment at 2190–2321 (APGPQLLNPG…EVTPKRQVLA (132 aa)) is disordered. Positions 2269 to 2289 (STPSPATATGAMATTTGALPA) are enriched in low complexity. Positions 2296–2308 (VPSSLAQAQTQLG) are enriched in polar residues.

This sequence belongs to the NOTCH family. Heterodimer of a C-terminal fragment N(TM) and a N-terminal fragment N(EC) which are probably linked by disulfide bonds. Interacts with MAML1, MAML2 and MAML3 which act as transcriptional coactivators for NOTCH3. Interacts with PSMA1. Interacts with HIF1AN. Synthesized in the endoplasmic reticulum as an inactive form which is proteolytically cleaved by a furin-like convertase in the trans-Golgi network before it reaches the plasma membrane to yield an active, ligand-accessible form. Cleavage results in a C-terminal fragment N(TM) and a N-terminal fragment N(EC). Following ligand binding, it is cleaved by TNF-alpha converting enzyme (TACE) to yield a membrane-associated intermediate fragment called notch extracellular truncation (NEXT). This fragment is then cleaved by presenilin dependent gamma-secretase to release a notch-derived peptide containing the intracellular domain (NICD) from the membrane. Post-translationally, phosphorylated. In terms of processing, hydroxylated by HIF1AN. As to expression, ubiquitously expressed in fetal and adult tissues.

The protein resides in the cell membrane. Its subcellular location is the nucleus. Functionally, functions as a receptor for membrane-bound ligands Jagged1, Jagged2 and Delta1 to regulate cell-fate determination. Upon ligand activation through the released notch intracellular domain (NICD) it forms a transcriptional activator complex with RBPJ/RBPSUH and activates genes of the enhancer of split locus. Affects the implementation of differentiation, proliferation and apoptotic programs. This is Neurogenic locus notch homolog protein 3 (NOTCH3) from Homo sapiens (Human).